Reading from the N-terminus, the 125-residue chain is Ribosome maturation factor RimP (125 aa).

The protein belongs to the RimP family.

The protein localises to the cytoplasm. Functionally, required for maturation of 30S ribosomal subunits. The polypeptide is Ribosome maturation factor RimP (Rickettsia canadensis (strain McKiel)).